The chain runs to 339 residues: 3,4-dihydroxy-2-butanone 4-phosphate synthase (339 aa).

The segment at 1-206 is DHBP synthase; it reads MKFVSVEQAI…YRLKHESLIK (206 aa). D-ribulose 5-phosphate-binding positions include 27 to 28, aspartate 32, 139 to 143, and glutamate 163; these read RE and RTGHT. Position 28 (glutamate 28) interacts with Mg(2+). Histidine 142 contacts Mg(2+). Residues 207–339 form a GTP cyclohydrolase II-like region; that stretch reads LEEKSQSVLA…GLNLKACNFN (133 aa).

This sequence in the N-terminal section; belongs to the DHBP synthase family. In the C-terminal section; belongs to the GTP cyclohydrolase II family. The cofactor is Mg(2+). Mn(2+) is required as a cofactor.

It catalyses the reaction D-ribulose 5-phosphate = (2S)-2-hydroxy-3-oxobutyl phosphate + formate + H(+). It participates in cofactor biosynthesis; riboflavin biosynthesis; 2-hydroxy-3-oxobutyl phosphate from D-ribulose 5-phosphate: step 1/1. Functionally, catalyzes the conversion of D-ribulose 5-phosphate to formate and 3,4-dihydroxy-2-butanone 4-phosphate. This Campylobacter jejuni subsp. jejuni serotype O:2 (strain ATCC 700819 / NCTC 11168) protein is 3,4-dihydroxy-2-butanone 4-phosphate synthase (ribB).